Here is a 169-residue protein sequence, read N- to C-terminus: Peptide methionine sulfoxide reductase MsrA (169 aa).

The active site involves Cys10.

It belongs to the MsrA Met sulfoxide reductase family.

The catalysed reaction is L-methionyl-[protein] + [thioredoxin]-disulfide + H2O = L-methionyl-(S)-S-oxide-[protein] + [thioredoxin]-dithiol. It carries out the reaction [thioredoxin]-disulfide + L-methionine + H2O = L-methionine (S)-S-oxide + [thioredoxin]-dithiol. Its function is as follows. Has an important function as a repair enzyme for proteins that have been inactivated by oxidation. Catalyzes the reversible oxidation-reduction of methionine sulfoxide in proteins to methionine. The sequence is that of Peptide methionine sulfoxide reductase MsrA from Streptococcus pyogenes serotype M28 (strain MGAS6180).